A 261-amino-acid polypeptide reads, in one-letter code: Protein LIKE COV 2 (261 aa).

A disordered region spans residues 1-38 (MAEGKEATTSSLSQGLTPHQDPDDAPKSPPNSPNSSTR). Residues 1–56 (MAEGKEATTSSLSQGLTPHQDPDDAPKSPPNSPNSSTRKACYGVLQSWVSKKFMTG) are Cytoplasmic-facing. Polar residues predominate over residues 7-17 (ATTSSLSQGLT). Residues 57–77 (FVVLFPVAVTFLITWWFIQFV) traverse the membrane as a helical segment. Over 78–91 (DGFFSPIYENLGVD) the chain is Extracellular. A helical transmembrane segment spans residues 92-112 (IFGLGFITSVLFTFFVGIFAS). Topologically, residues 113-261 (SWLGSTVFWL…HSLRVPLNRL (149 aa)) are cytoplasmic.

It belongs to the plant COV1 protein family.

It is found in the membrane. This is Protein LIKE COV 2 from Arabidopsis thaliana (Mouse-ear cress).